We begin with the raw amino-acid sequence, 621 residues long: UvrABC system protein C (621 aa).

A GIY-YIG domain is found at 13-92 (EKPGVYLMKN…IKKYRPRYNI (80 aa)). The UVR domain maps to 204–239 (NEVINDLKIKMEKASSELKFEEAASFRDKLLAVEKI).

Belongs to the UvrC family. In terms of assembly, interacts with UvrB in an incision complex.

It is found in the cytoplasm. Functionally, the UvrABC repair system catalyzes the recognition and processing of DNA lesions. UvrC both incises the 5' and 3' sides of the lesion. The N-terminal half is responsible for the 3' incision and the C-terminal half is responsible for the 5' incision. The chain is UvrABC system protein C from Clostridium novyi (strain NT).